The chain runs to 280 residues: Ribosomal RNA large subunit methyltransferase J (280 aa).

Residues His19, His42, Ser100, Glu118, 143-144 (DG), and Asp164 contribute to the S-adenosyl-L-methionine site. The Proton acceptor role is filled by Asp164.

It belongs to the RlmJ family. Monomer.

It carries out the reaction adenosine(2030) in 23S rRNA + S-adenosyl-L-methionine = N(6)-methyladenosine(2030) in 23S rRNA + S-adenosyl-L-homocysteine + H(+). Its function is as follows. Specifically methylates the adenine in position 2030 of 23S rRNA. Nascent 23S rRNA seems to be the natural substrate. Appears to be not necessary for ribosome assembly. Required for the utilization of extracellular DNA as the sole source of carbon and energy. The protein is Ribosomal RNA large subunit methyltransferase J of Escherichia coli (strain K12).